Reading from the N-terminus, the 424-residue chain is UDP-N-acetylglucosamine 1-carboxyvinyltransferase (424 aa).

22-23 serves as a coordination point for phosphoenolpyruvate; that stretch reads KN. R95 lines the UDP-N-acetyl-alpha-D-glucosamine pocket. Catalysis depends on C119, which acts as the Proton donor. C119 is subject to 2-(S-cysteinyl)pyruvic acid O-phosphothioketal. Residues 124 to 128, D311, and I333 each bind UDP-N-acetyl-alpha-D-glucosamine; that span reads RPVDQ.

This sequence belongs to the EPSP synthase family. MurA subfamily.

The protein localises to the cytoplasm. The catalysed reaction is phosphoenolpyruvate + UDP-N-acetyl-alpha-D-glucosamine = UDP-N-acetyl-3-O-(1-carboxyvinyl)-alpha-D-glucosamine + phosphate. The protein operates within cell wall biogenesis; peptidoglycan biosynthesis. In terms of biological role, cell wall formation. Adds enolpyruvyl to UDP-N-acetylglucosamine. The polypeptide is UDP-N-acetylglucosamine 1-carboxyvinyltransferase (Polaromonas sp. (strain JS666 / ATCC BAA-500)).